The sequence spans 1264 residues: uncharacterized protein (1264 aa).

A signal peptide spans 1 to 18; that stretch reads MMRKYLILLILLPALAVG. The helical transmembrane segment at 1215 to 1235 threads the bilayer; sequence SYTVLGVVVITILTMSIILCL.

The protein localises to the host membrane. This is an uncharacterized protein from Ostreid herpesvirus 1 (isolate France) (OsHV-1).